Consider the following 392-residue polypeptide: Chalcone synthase-like protein 1 (392 aa).

The active site involves Cys166.

Belongs to the thiolase-like superfamily. Chalcone/stilbene synthases family. Expressed at the same level in leaves and in glandular trichomes.

The protein localises to the cytoplasm. In terms of biological role, chalcone synthase that may use malonyl-CoA and hexanoyl-CoA as substrates but without producing olivetol or olivetolic acid. The polypeptide is Chalcone synthase-like protein 1 (CAN383) (Cannabis sativa (Hemp)).